Reading from the N-terminus, the 63-residue chain is Sec-independent protein translocase protein TatA (63 aa).

The helical transmembrane segment at Met1 to Gly21 threads the bilayer. Residues Gly42–Lys63 form a disordered region. The span at Lys53–Lys63 shows a compositional bias: basic and acidic residues.

The protein belongs to the TatA/E family. As to quaternary structure, the Tat system comprises two distinct complexes: a TatABC complex, containing multiple copies of TatA, TatB and TatC subunits, and a separate TatA complex, containing only TatA subunits. Substrates initially bind to the TatABC complex, which probably triggers association of the separate TatA complex to form the active translocon.

It localises to the cell inner membrane. Part of the twin-arginine translocation (Tat) system that transports large folded proteins containing a characteristic twin-arginine motif in their signal peptide across membranes. TatA could form the protein-conducting channel of the Tat system. This chain is Sec-independent protein translocase protein TatA, found in Rhizobium etli (strain CIAT 652).